The following is an 80-amino-acid chain: Acyl carrier protein (80 aa).

The Carrier domain occupies 2 to 77 (SDIEQRVKKI…QAIDYAKAHV (76 aa)). S37 is modified (O-(pantetheine 4'-phosphoryl)serine).

The protein belongs to the acyl carrier protein (ACP) family. 4'-phosphopantetheine is transferred from CoA to a specific serine of apo-ACP by AcpS. This modification is essential for activity because fatty acids are bound in thioester linkage to the sulfhydryl of the prosthetic group.

It localises to the cytoplasm. The protein operates within lipid metabolism; fatty acid biosynthesis. Its function is as follows. Carrier of the growing fatty acid chain in fatty acid biosynthesis. This chain is Acyl carrier protein, found in Herminiimonas arsenicoxydans.